Reading from the N-terminus, the 185-residue chain is Peptidyl-tRNA hydrolase (185 aa).

Tyr-14 lines the tRNA pocket. The Proton acceptor role is filled by His-19. TRNA-binding residues include Phe-64, Asn-66, and Asn-112.

This sequence belongs to the PTH family. Monomer.

The protein localises to the cytoplasm. It catalyses the reaction an N-acyl-L-alpha-aminoacyl-tRNA + H2O = an N-acyl-L-amino acid + a tRNA + H(+). Its function is as follows. Hydrolyzes ribosome-free peptidyl-tRNAs (with 1 or more amino acids incorporated), which drop off the ribosome during protein synthesis, or as a result of ribosome stalling. Functionally, catalyzes the release of premature peptidyl moieties from peptidyl-tRNA molecules trapped in stalled 50S ribosomal subunits, and thus maintains levels of free tRNAs and 50S ribosomes. In Lacticaseibacillus paracasei (strain ATCC 334 / BCRC 17002 / CCUG 31169 / CIP 107868 / KCTC 3260 / NRRL B-441) (Lactobacillus paracasei), this protein is Peptidyl-tRNA hydrolase.